A 910-amino-acid chain; its full sequence is 2-oxoglutarate dehydrogenase E1 component (910 aa).

The protein belongs to the alpha-ketoglutarate dehydrogenase family. In terms of assembly, homodimer. Part of the 2-oxoglutarate dehydrogenase (OGDH) complex composed of E1 (2-oxoglutarate dehydrogenase), E2 (dihydrolipoamide succinyltransferase) and E3 (dihydrolipoamide dehydrogenase); the complex contains multiple copies of the three enzymatic components (E1, E2 and E3). It depends on thiamine diphosphate as a cofactor.

It carries out the reaction N(6)-[(R)-lipoyl]-L-lysyl-[protein] + 2-oxoglutarate + H(+) = N(6)-[(R)-S(8)-succinyldihydrolipoyl]-L-lysyl-[protein] + CO2. In terms of biological role, E1 component of the 2-oxoglutarate dehydrogenase (OGDH) complex which catalyzes the decarboxylation of 2-oxoglutarate, the first step in the conversion of 2-oxoglutarate to succinyl-CoA and CO(2). The protein is 2-oxoglutarate dehydrogenase E1 component of Staphylococcus aureus (strain N315).